Here is a 269-residue protein sequence, read N- to C-terminus: Protein MGF 360-15R (269 aa).

It belongs to the asfivirus MGF 360 family.

Plays a role in virus cell tropism, and may be required for efficient virus replication in macrophages. The polypeptide is Protein MGF 360-15R (African swine fever virus (isolate Pig/Kenya/KEN-50/1950) (ASFV)).